The sequence spans 473 residues: 6-phospho-beta-glucosidase (473 aa).

Glutamate 174 functions as the Proton donor in the catalytic mechanism. Residue glutamate 366 is the Nucleophile of the active site.

Belongs to the glycosyl hydrolase 1 family.

The enzyme catalyses 6-phospho-beta-D-glucosyl-(1-&gt;4)-D-glucose + H2O = D-glucose 6-phosphate + D-glucose. This chain is 6-phospho-beta-glucosidase (abgA), found in Clostridium longisporum.